Reading from the N-terminus, the 362-residue chain is Homeobox protein extradenticle (362 aa).

Residues 34–225 form the PBC domain; sequence PRKQDIGEIL…VMILRSRFLD (192 aa). Residues 41–120 are PBC-A; it reads EILQQIMNIT…EGVAGPEKGG (80 aa). Residues 123–225 are PBC-B; that stretch reads DFLSQSDLTG…VMILRSRFLD (103 aa). Residues 226 to 288 constitute a DNA-binding region (homeobox; TALE-type); that stretch reads ARRKRRNFSK…NKRIRYKKNI (63 aa). Positions 305–362 are disordered; sequence GASPYSMGGPPSGAATPMMSPAPAQDSMGYSLGSGGYDQQQPYDGSMGYDQLHQDLSP.

Belongs to the TALE/PBX homeobox family.

It is found in the nucleus. Transcription factor which acts with the selector homeodomain proteins altering the regulation of downstream target genes such as wingless (wg), teashirt (tsh) and decapentaplegic (dpp), thus affecting segmental identity. This Anopheles gambiae (African malaria mosquito) protein is Homeobox protein extradenticle.